Consider the following 115-residue polypeptide: Iron-sulfur cluster insertion protein ErpA (115 aa).

Positions 43, 107, and 109 each coordinate iron-sulfur cluster.

This sequence belongs to the HesB/IscA family. In terms of assembly, homodimer. Requires iron-sulfur cluster as cofactor.

In terms of biological role, required for insertion of 4Fe-4S clusters for at least IspG. The protein is Iron-sulfur cluster insertion protein ErpA of Buchnera aphidicola subsp. Baizongia pistaciae (strain Bp).